The following is a 70-amino-acid chain: Putative membrane protein insertion efficiency factor (70 aa).

This sequence belongs to the UPF0161 family.

It is found in the cell inner membrane. Its function is as follows. Could be involved in insertion of integral membrane proteins into the membrane. The protein is Putative membrane protein insertion efficiency factor of Desulforapulum autotrophicum (strain ATCC 43914 / DSM 3382 / VKM B-1955 / HRM2) (Desulfobacterium autotrophicum).